Consider the following 67-residue polypeptide: Large ribosomal subunit protein bL31 (67 aa).

This sequence belongs to the bacterial ribosomal protein bL31 family. Type A subfamily. In terms of assembly, part of the 50S ribosomal subunit.

In terms of biological role, binds the 23S rRNA. The polypeptide is Large ribosomal subunit protein bL31 (Finegoldia magna (strain ATCC 29328 / DSM 20472 / WAL 2508) (Peptostreptococcus magnus)).